Reading from the N-terminus, the 378-residue chain is Probable pectin lyase A (378 aa).

Residues 1 to 18 (MKYASFLALVGFITSTSA) form the signal peptide. Cystine bridges form between Cys81–Cys100 and Cys90–Cys224. Residue Arg254 is part of the active site. Cys321 and Cys329 are disulfide-bonded.

It belongs to the polysaccharide lyase 1 family.

It localises to the secreted. The catalysed reaction is Eliminative cleavage of (1-&gt;4)-alpha-D-galacturonan methyl ester to give oligosaccharides with 4-deoxy-6-O-methyl-alpha-D-galact-4-enuronosyl groups at their non-reducing ends.. Pectinolytic enzymes consist of four classes of enzymes: pectin lyase, polygalacturonase, pectin methylesterase and rhamnogalacturonase. Among pectinolytic enzymes, pectin lyase is the most important in depolymerization of pectin, since it cleaves internal glycosidic bonds of highly methylated pectins. In Aspergillus clavatus (strain ATCC 1007 / CBS 513.65 / DSM 816 / NCTC 3887 / NRRL 1 / QM 1276 / 107), this protein is Probable pectin lyase A (pelA).